A 349-amino-acid polypeptide reads, in one-letter code: Glycerol-3-phosphate dehydrogenase [NAD(+)], cytoplasmic (349 aa).

NAD(+) is bound at residue 10-15 (GSGNWG). Substrate is bound at residue lysine 120. Residue alanine 153 participates in NAD(+) binding. Serine 154 carries the phosphoserine modification. The Proton acceptor role is filled by lysine 204. Arginine 269 contributes to the NAD(+) binding site. 269–270 (RN) is a binding site for substrate. The residue at position 289 (lysine 289) is an N6-succinyllysine. NAD(+) is bound by residues lysine 296 and glutamine 298. The residue at position 326 (tyrosine 326) is a Phosphotyrosine.

Belongs to the NAD-dependent glycerol-3-phosphate dehydrogenase family. Homodimer.

Its subcellular location is the cytoplasm. It catalyses the reaction sn-glycerol 3-phosphate + NAD(+) = dihydroxyacetone phosphate + NADH + H(+). In terms of biological role, has glycerol-3-phosphate dehydrogenase activity. The sequence is that of Glycerol-3-phosphate dehydrogenase [NAD(+)], cytoplasmic from Rattus norvegicus (Rat).